Reading from the N-terminus, the 382-residue chain is Gibberellin 2-beta-dioxygenase 1 (382 aa).

The Fe2OG dioxygenase domain maps to 189–321 (DSDCLLRINH…RLSTIYFASP (133 aa)). Tyr-199 contributes to the 2-oxoglutarate binding site. The Fe cation site is built by His-241, Asp-243, and His-302. 2-oxoglutarate contacts are provided by Arg-312 and Ser-314.

It belongs to the iron/ascorbate-dependent oxidoreductase family. GA2OX subfamily. L-ascorbate is required as a cofactor. It depends on Fe(2+) as a cofactor. In terms of tissue distribution, expressed in roots, shoot apex, and in the basal region of leaf primordia and young leaves.

The enzyme catalyses gibberellin A1 + 2-oxoglutarate + O2 = gibberellin A8 + succinate + CO2. Functionally, catalyzes the 2-beta-hydroxylation of several biologically active gibberellins, leading to the homeostatic regulation of their endogenous level. Catabolism of gibberellins (GAs) plays a central role in plant development. Controls the level of bioactive GAs in the shoot apical meristem, which regulates the vegetative to reproductive phase transition. In vitro, converts GA1, GA4, GA9, GA20, and GA44 to the corresponding 2-beta-hydroxylated products GA8, GA34, GA51, GA29, and GA98, respectively. The polypeptide is Gibberellin 2-beta-dioxygenase 1 (Oryza sativa subsp. japonica (Rice)).